Consider the following 305-residue polypeptide: Probable lipid kinase YegS-like (305 aa).

Positions 1–129 (MTQRRAMLIL…VDLGEVGGKL (129 aa)) constitute a DAGKc domain. Residues Thr39, 65–71 (GDGTLRD), and Thr92 contribute to the ATP site. Mg(2+) contacts are provided by Leu210, Asp213, and Leu215. Glu268 serves as the catalytic Proton acceptor.

The protein belongs to the diacylglycerol/lipid kinase family. YegS lipid kinase subfamily. Requires Mg(2+) as cofactor. Ca(2+) is required as a cofactor.

It localises to the cytoplasm. In terms of biological role, probably phosphorylates lipids; the in vivo substrate is unknown. The chain is Probable lipid kinase YegS-like from Pseudomonas savastanoi pv. phaseolicola (strain 1448A / Race 6) (Pseudomonas syringae pv. phaseolicola (strain 1448A / Race 6)).